The chain runs to 31 residues: Cytochrome b6-f complex subunit 6 (31 aa).

A helical membrane pass occupies residues 4 to 24; that stretch reads ITSYFGFLLAALTITSALFIG.

It belongs to the PetL family. As to quaternary structure, the 4 large subunits of the cytochrome b6-f complex are cytochrome b6, subunit IV (17 kDa polypeptide, PetD), cytochrome f and the Rieske protein, while the 4 small subunits are PetG, PetL, PetM and PetN. The complex functions as a dimer.

It is found in the plastid. The protein localises to the chloroplast thylakoid membrane. Its function is as follows. Component of the cytochrome b6-f complex, which mediates electron transfer between photosystem II (PSII) and photosystem I (PSI), cyclic electron flow around PSI, and state transitions. PetL is important for photoautotrophic growth as well as for electron transfer efficiency and stability of the cytochrome b6-f complex. The sequence is that of Cytochrome b6-f complex subunit 6 from Hamamelis virginiana (Witch-hazel).